Here is a 158-residue protein sequence, read N- to C-terminus: Cyclic pyranopterin monophosphate synthase (158 aa).

Substrate is bound by residues 75–77 and 113–114; these read LCH and ME. Asp-128 is a catalytic residue.

Belongs to the MoaC family. In terms of assembly, homohexamer; trimer of dimers.

It carries out the reaction (8S)-3',8-cyclo-7,8-dihydroguanosine 5'-triphosphate = cyclic pyranopterin phosphate + diphosphate. The protein operates within cofactor biosynthesis; molybdopterin biosynthesis. Its function is as follows. Catalyzes the conversion of (8S)-3',8-cyclo-7,8-dihydroguanosine 5'-triphosphate to cyclic pyranopterin monophosphate (cPMP). This chain is Cyclic pyranopterin monophosphate synthase, found in Actinobacillus succinogenes (strain ATCC 55618 / DSM 22257 / CCUG 43843 / 130Z).